The chain runs to 446 residues: Inward rectifier potassium channel 4 (446 aa).

Residues 1–55 are Cytoplasmic-facing; it reads MHGHSRNGQAHVPRRKRRNRFVKKNGQCNVYFANLSNKSQRYMADIFTTCVDTRW. Residues 56–80 form a helical membrane-spanning segment; the sequence is RYMLMIFSAAFLVSWLFFGLLFWCI. Over 81 to 120 the chain is Extracellular; it reads AFFHGDLEPSPSGPTAGGPGGNGGGAAPTAAKPCIMHVNG. Positions 91–111 are val/Gly/Ala/Pro stretch; sequence PSGPTAGGPGGNGGGAAPTAA. The segment at residues 121 to 132 is an intramembrane region (helical; Pore-forming); the sequence is FLGAFLFSVETQ. Residues 133–139 constitute an intramembrane region (pore-forming); that stretch reads TTIGYGF. The short motif at 134 to 139 is the Selectivity filter element; that stretch reads TIGYGF. Over 140-148 the chain is Extracellular; it reads RCVTEECPL. Residues 149–170 form a helical membrane-spanning segment; it reads AVIAVVVQSIVGCVIDSFMIGT. Over 171-446 the chain is Cytoplasmic; that stretch reads IMAKMPRPKK…NISYRRESAI (276 aa). A PDZ-binding motif is present at residues 444 to 446; that stretch reads SAI.

This sequence belongs to the inward rectifier-type potassium channel (TC 1.A.2.1) family. KCNJ4 subfamily. In terms of assembly, homomultimeric and heteromultimeric association with KCNJ2 and KCNJ12. Interacts with DLG2 and DLG4. Associates, via its PDZ-recognition domain, with a complex containing LIN7A, LIN7B, LIN7C, DLG1, CASK and APBA1. Interacts with TAX1BP3. TAX1BP3 competes with LIN7 family members for KCNJ4 binding. Detected in kidney distal convoluted tubules (at protein level). Widely expressed throughout the brain. Also found in some peripheral tissues.

The protein resides in the cell membrane. It localises to the cytoplasmic vesicle membrane. It is found in the postsynaptic cell membrane. It catalyses the reaction K(+)(in) = K(+)(out). Inward rectifier potassium channels are characterized by a greater tendency to allow potassium to flow into the cell rather than out of it. Their voltage dependence is regulated by the concentration of extracellular potassium; as external potassium is raised, the voltage range of the channel opening shifts to more positive voltages. The inward rectification is mainly due to the blockage of outward current by internal magnesium. Can be blocked by extracellular barium and cesium. The sequence is that of Inward rectifier potassium channel 4 (Kcnj4) from Rattus norvegicus (Rat).